Consider the following 75-residue polypeptide: MLIPYEQLQAETLTRLIEDFVTRDGTDNGDDTPLETRVLRVRQALAKGQAFILFDPESQQCQLLAKHDVPRELLD.

Belongs to the UPF0270 family.

The sequence is that of UPF0270 protein PputGB1_1339 from Pseudomonas putida (strain GB-1).